The primary structure comprises 115 residues: Large ribosomal subunit protein bL19 (115 aa).

This sequence belongs to the bacterial ribosomal protein bL19 family.

Its function is as follows. This protein is located at the 30S-50S ribosomal subunit interface and may play a role in the structure and function of the aminoacyl-tRNA binding site. The protein is Large ribosomal subunit protein bL19 of Lacticaseibacillus casei (strain BL23) (Lactobacillus casei).